A 492-amino-acid chain; its full sequence is WD repeat-containing protein JIP5 (492 aa).

5 WD repeats span residues 127 to 166, 178 to 217, 236 to 274, 276 to 317, and 365 to 405; these read RHKG…VVKK, KKND…LSNS, RSAY…ILIS, DQED…LEDQ, and RNHS…VEEN. 2 stretches are compositionally biased toward acidic residues: residues 404–414 and 422–433; these read ENASVESDSDE and DLSDDTSSDDET. The segment at 404–472 is disordered; the sequence is ENASVESDSD…SKSVKKRKIM (69 aa). Positions 449–462 are enriched in basic and acidic residues; sequence KDLKEDHQEEKESN.

In terms of assembly, interacts with BUD27 and GIS1.

It localises to the nucleus. The protein localises to the nucleolus. This is WD repeat-containing protein JIP5 (JIP5) from Saccharomyces cerevisiae (strain ATCC 204508 / S288c) (Baker's yeast).